Reading from the N-terminus, the 117-residue chain is Ig heavy chain V region J558 (117 aa).

The Ig-like domain occupies glutamate 1 to serine 116. A disulfide bond links cysteine 22 and cysteine 96.

The protein is Ig heavy chain V region J558 of Mus musculus (Mouse).